A 115-amino-acid polypeptide reads, in one-letter code: NADH-ubiquinone oxidoreductase chain 3 (115 aa).

3 helical membrane-spanning segments follow: residues 3-23 (LYTVIFINILLSLTLILVAFW), 55-75 (FFLVAITFLLFDLEIALLLPL), and 86-106 (TMMIMAFILVTILSLGLAYEW).

It belongs to the complex I subunit 3 family. Core subunit of respiratory chain NADH dehydrogenase (Complex I) which is composed of 45 different subunits. Interacts with TMEM186. Interacts with TMEM242.

The protein resides in the mitochondrion inner membrane. The catalysed reaction is a ubiquinone + NADH + 5 H(+)(in) = a ubiquinol + NAD(+) + 4 H(+)(out). Its function is as follows. Core subunit of the mitochondrial membrane respiratory chain NADH dehydrogenase (Complex I) which catalyzes electron transfer from NADH through the respiratory chain, using ubiquinone as an electron acceptor. Essential for the catalytic activity of complex I. The chain is NADH-ubiquinone oxidoreductase chain 3 from Mus musculus (Mouse).